The following is a 1136-amino-acid chain: MRHTGSWKLWTWVTTFLLPACTCLTVRDKPETTCPTLRTERYQDDRNKSELSGFDLGESFALRHAFCEGDKTCFKLGSVLLIRDTVKIFPKGLPEEYAIAVMFRVRRSTKKERWFLWKILNQQNMAQISVVIDGTKKVVEFMFRGAEGDLLNYVFKNRELRPLFDRQWHKLGIGVQSRVLSLYMDCNLIASRHTEEKNSVDFQGRTIIAARASDGKPVDIELHQLRIYCNANFLAEESCCNLSPTKCPEQDDFGSTTSSWGTSNTGKMSSYLPGKQELKDTCQCIPNKEEAGLPGTLRSIGHKGDKGEPGEHGLDGTPGLPGQKGEQGLEGIKGEIGEKGEPGAKGDSGLDGLNGQDGLKGDSGPQGPPGPKGDKGDMGPPGPPALTGSIGIQGPQGPPGKEGQRGRRGKTGPPGNPGPPGPPGPPGLQGLQQPFGGYFNKGTGEHGASGPKGEKGDTGLPGFPGSVGPKGHKGEPGEPLTKGEKGDRGEPGLLGPQGIKGEPGDPGPPGLLGSPGLKGQQGPAGSMGPRGPPGDVGLPGEHGIPGKQGVKGEKGDPGGRLGPPGLPGLKGDAGPPGISLPGKPGLDGNPGSPGPRGPKGERGLPGLHGSPGDTGPPGVGIPGRTGSQGPAGEPGIQGPRGLPGLPGTPGMPGNDGAPGKDGKPGLPGPPGDPIALPLLGDIGALLKNFCGNCQANVPGLKSIKGDDGSTGEPGKYDPAARKGDVGPRGPPGFPGREGPKGSKGERGYPGIHGEKGDEGLQGIPGLSGAPGPTGPPGLTGRTGHPGPTGAKGDKGSEGPPGKPGPPGPPGVPLNEGNGMSSLYKIQGGVNVPGYPGPPGPPGPKGDPGPVGEPGAMGLPGLEGFPGVKGDRGPAGPPGIAGISGKPGAPGPPGVPGEQGERGPIGDTGFPGPEGPSGKPGINGKDGLPGAQGIMGKPGDRGPKGERGDQGIPGDRGPQGERGKPGLTGMKGAIGPVGPAGSKGSTGPPGHQGPPGNPGIPGTPADAVSFEEIKHYINQEVLRIFEERMAVFLSQLKLPAAMLSAQAHGRPGPPGKDGLPGPPGDPGPQGYRGQKGERGEPGIGLPGSPGLPGSSAVGLPGSPGAPGPQGPPGPSGRCNPEDCLYPAPPPHQQAGGK.

The N-terminal stretch at 1–23 is a signal peptide; the sequence is MRHTGSWKLWTWVTTFLLPACTC. Residue Asn-47 is glycosylated (N-linked (GlcNAc...) asparagine). Residues 47 to 231 form the Laminin G-like domain; sequence NKSELSGFDL…LHQLRIYCNA (185 aa). Disordered regions lie at residues 252–272, 289–673, 699–1005, and 1043–1136; these read DFGS…SSYL, EEAG…PGDP, GLKS…TPAD, and SAQA…AGGK. A compositionally biased stretch (low complexity) spans 254–266; sequence GSTTSSWGTSNTG. Residues 289-348 are triple-helical region 1 (COL1); that stretch reads EEAGLPGTLRSIGHKGDKGEPGEHGLDGTPGLPGQKGEQGLEGIKGEIGEKGEPGAKGDS. Collagen-like domains follow at residues 292–346, 347–388, and 389–430; these read GLPG…GAKG, DSGL…ALTG, and SIGI…GLQG. 2 stretches are compositionally biased toward basic and acidic residues: residues 302-314 and 332-344; these read HKGD…EHGL and IKGE…EPGA. Residues 367-426 form a triple-helical region 2 (COL2) region; it reads GPPGPKGDKGDMGPPGPPALTGSIGIQGPQGPPGKEGQRGRRGKTGPPGNPGPPGPPGPP. Over residues 387 to 401 the composition is skewed to low complexity; the sequence is TGSIGIQGPQGPPGK. Positions 414–426 are enriched in pro residues; that stretch reads PGNPGPPGPPGPP. Residues 428-437 are compositionally biased toward low complexity; the sequence is LQGLQQPFGG. Residues 442–682 are triple-helical region 3 (COL3); sequence GTGEHGASGP…PIALPLLGDI (241 aa). Positions 472-490 are enriched in basic and acidic residues; it reads HKGEPGEPLTKGEKGDRGE. 2 stretches are compositionally biased toward low complexity: residues 511 to 523 and 567 to 577; these read LLGS…QQGP and PGLKGDAGPPG. Collagen-like domains are found at residues 519-577, 578-618, 620-673, 722-777, 778-810, and 833-891; these read GQQG…GPPG, ISLP…GPPG, GIPG…PGDP, KGDV…GPPG, LTGR…GPPG, and GYPG…APGP. Residues 634–645 show a composition bias toward low complexity; it reads PGIQGPRGLPGL. Positions 694–812 are triple-helical region 4 (COL4); that stretch reads QANVPGLKSI…PGPPGPPGVP (119 aa). 2 stretches are compositionally biased toward basic and acidic residues: residues 714–725 and 737–758; these read GKYDPAARKGDV and EGPK…KGDE. Positions 764–788 are enriched in low complexity; sequence PGLSGAPGPTGPPGLTGRTGHPGPT. Pro residues-rich tracts occupy residues 800 to 811 and 834 to 846; these read PGKPGPPGPPGV and YPGP…PKGD. Residues 827–1006 are triple-helical region 5 (COL5); that stretch reads GGVNVPGYPG…PGIPGTPADA (180 aa). The span at 877 to 886 shows a compositional bias: low complexity; sequence PGIAGISGKP. Positions 937-948 are enriched in basic and acidic residues; that stretch reads PGDRGPKGERGD. A Cell attachment site motif is present at residues 946-948; it reads RGD. Positions 1048–1105 are triple-helical region 6 (COL6); sequence GRPGPPGKDGLPGPPGDPGPQGYRGQKGERGEPGIGLPGSPGLPGSSAVGLPGSPGAP. Positions 1087-1101 are enriched in low complexity; the sequence is SPGLPGSSAVGLPGS. Positions 1102 to 1113 are enriched in pro residues; that stretch reads PGAPGPQGPPGP.

Belongs to the fibril-associated collagens with interrupted helices (FACIT) family. Oligomer; disulfide-linked. Prolines at the third position of the tripeptide repeating unit (G-X-Y) are hydroxylated in some or all of the chains.

It localises to the secreted. It is found in the extracellular space. The protein localises to the extracellular matrix. May act as a cross-bridge between fibrils and other extracellular matrix molecules. Involved in skeletal myogenesis in the developing esophagus. May play a role in organization of the pericellular matrix or the sphinteric smooth muscle. In Mus musculus (Mouse), this protein is Collagen alpha-1(XIX) chain.